Consider the following 223-residue polypeptide: Alpha-S2-casein (223 aa).

The N-terminal stretch at 1 to 15 (MKLFIFTCLLAVALA) is a signal peptide. 8 positions are modified to phosphoserine: serine 23, serine 24, serine 25, serine 28, serine 46, serine 71, serine 72, and serine 73. Repeats lie at residues 76-128 (FADI…TLGK) and 129-223 (EQIS…ERQA). A phosphoserine mark is found at serine 132, serine 147, and serine 155.

It belongs to the alpha-casein family. In terms of tissue distribution, mammary gland specific. Secreted in milk.

The protein localises to the secreted. Its function is as follows. Important role in the capacity of milk to transport calcium phosphate. This Cavia porcellus (Guinea pig) protein is Alpha-S2-casein (CSN1S2).